The following is a 489-amino-acid chain: Pre-glycoprotein polyprotein GP complex (489 aa).

Glycine 2 is lipidated: N-myristoyl glycine; by host. The Extracellular portion of the chain corresponds to 2-17 (GQIVTFFQEVPHILEE). A helical membrane pass occupies residues 18–33 (VMNIVLMTLSILAILK). Residues 34-58 (GIYNVMTCGIIGLITFLFLCGRSCS) are Cytoplasmic-facing. Position 57 (cysteine 57) interacts with Zn(2+). The Extracellular segment spans residues 59–430 (SIYKDNYEFF…QSTTPLGLVD (372 aa)). 6 N-linked (GlcNAc...) asparagine; by host glycosylation sites follow: asparagine 78, asparagine 88, asparagine 98, asparagine 108, asparagine 118, and asparagine 166. 6 disulfides stabilise this stretch: cysteine 85-cysteine 229, cysteine 117-cysteine 154, cysteine 179-cysteine 210, cysteine 277-cysteine 290, cysteine 299-cysteine 308, and cysteine 362-cysteine 383. Asparagine 222 carries N-linked (GlcNAc...) asparagine; by host glycosylation. 4 N-linked (GlcNAc...) asparagine; by host glycosylation sites follow: asparagine 363, asparagine 371, asparagine 388, and asparagine 393. Residues 431 to 451 (LFVFSTSFYLISVFLHLIKIP) form a helical membrane-spanning segment. Residues 452-489 (THRHIKGKPCPKPHRLNHMAICSCGFYKQPGLPTQWKR) lie on the Cytoplasmic side of the membrane. Zn(2+) is bound by residues histidine 453, histidine 455, cysteine 461, histidine 465, cysteine 473, and cysteine 475.

This sequence belongs to the arenaviridae GPC protein family. In terms of assembly, interacts with glycoprotein G2. Part of the GP complex (GP-C) together with glycoprotein G1 and glycoprotein G2. The GP-complex interacts with protein Z, which interacts with ribonucleocapsid; these interactions may induce virion budding. As to quaternary structure, homotrimer; disulfide-linked. In pre-fusion state, G1 homotrimers bind G2 homotrimers via ionic interactions. Part of the GP complex (GP-C) together with glycoprotein G2 and the stable signal peptide. The GP-complex interacts with protein Z, which interacts with ribonucleocapsid; these interactions may induce virion budding. Homotrimer. Interacts with the stable signal peptide. In pre-fusion state, G2 homotrimers bind G1 homotrimers via ionic interactions. Part of the GP complex (GP-C) together with glycoprotein G1 and the stable signal peptide. Acidification in the endosome triggers rearrangements, which ultimately leads to a 6 helix bundle formed by the two heptad repeat domains (HR1 and HR2) in post-fusion state. The GP-complex interacts with protein Z, which interacts with ribonucleocapsid; these interactions may induce virion budding. Post-translationally, specific enzymatic cleavages in vivo yield mature proteins. GP-C polyprotein is cleaved in the endoplasmic reticulum by the host protease MBTPS1. Only cleaved glycoprotein is incorporated into virions. In terms of processing, the SSP remains stably associated with the GP complex following cleavage by signal peptidase and plays crucial roles in the trafficking of GP through the secretory pathway. Myristoylation is necessary for GP2-mediated fusion activity.

Its subcellular location is the virion membrane. The protein resides in the host endoplasmic reticulum membrane. It localises to the host Golgi apparatus membrane. The protein localises to the host cell membrane. In terms of biological role, functions as a cleaved signal peptide that is retained as the third component of the GP complex (GP-C). Helps to stabilize the spike complex in its native conformation. The SSP is required for efficient glycoprotein expression, post-translational maturation cleavage of G1 and G2, glycoprotein transport to the cell surface plasma membrane, formation of infectious virus particles, and acid pH-dependent glycoprotein-mediated cell fusion. Forms the virion spikes together with glycoprotein G2. The glycoprotein spike trimers are connected to the underlying matrix. Interacts with the host receptor leading to virus endocytosis. Its function is as follows. Forms the virion spikes together with glycoprotein G1. The glycoprotein spike trimers are connected to the underlying matrix. Class I viral fusion protein that directs fusion of viral and host endosomal membranes, leading to delivery of the nucleocapsid into the cytoplasm. Membrane fusion is mediated by irreversible conformational changes induced by acidification. The polypeptide is Pre-glycoprotein polyprotein GP complex (Mastomys natalensis (African soft-furred rat)).